The following is a 154-amino-acid chain: Pro-corazonin (154 aa).

The first 19 residues, M1–G19, serve as a signal peptide directing secretion. The residue at position 20 (Q20) is a Pyrrolidone carboxylic acid. At N30 the chain carries Asparagine amide. Positions L70–H154 are excised as a propeptide.

It belongs to the corazonin family. In terms of tissue distribution, expression is restricted to 24 neurons in the larval CNS (8 in the brain and 16 in the ventral nerve cord) and 12-16 neurons in the pars lateralis of the adult brain.

It is found in the secreted. Its function is as follows. Cardioactive peptide. Corazonin is probably involved in the physiological regulation of the heart beat. Clock (Clk) and cycle (cyc) proteins negatively regulate Crz transcription in a cell-specific manner. The polypeptide is Pro-corazonin (Crz) (Drosophila erecta (Fruit fly)).